Here is a 367-residue protein sequence, read N- to C-terminus: Putative F-box protein At4g10190 (367 aa).

An F-box domain is found at 3–53 (KRNIVDLPEDLVMEILARVPTVTLVRLQSTSKRWNVLIEDKRFAEQHFTNA).

This Arabidopsis thaliana (Mouse-ear cress) protein is Putative F-box protein At4g10190.